The chain runs to 186 residues: Nucleoside diphosphate kinase 6 (186 aa).

ATP contacts are provided by Lys-19, Phe-68, Arg-96, Thr-102, Arg-116, and Asn-126. Residue His-129 is the Pros-phosphohistidine intermediate of the active site.

Belongs to the NDK family. The cofactor is Mg(2+). As to expression, expressed at a moderately low level in many tissues. Most abundant in kidney, prostate, ovary, intestine, and spleen.

The catalysed reaction is a 2'-deoxyribonucleoside 5'-diphosphate + ATP = a 2'-deoxyribonucleoside 5'-triphosphate + ADP. It catalyses the reaction a ribonucleoside 5'-diphosphate + ATP = a ribonucleoside 5'-triphosphate + ADP. In terms of biological role, major role in the synthesis of nucleoside triphosphates other than ATP. The ATP gamma phosphate is transferred to the NDP beta phosphate via a ping-pong mechanism, using a phosphorylated active-site intermediate. Inhibitor of p53-induced apoptosis. The protein is Nucleoside diphosphate kinase 6 (NME6) of Homo sapiens (Human).